The chain runs to 467 residues: Asparagine--tRNA ligase (467 aa).

Belongs to the class-II aminoacyl-tRNA synthetase family. Homodimer.

It localises to the cytoplasm. The catalysed reaction is tRNA(Asn) + L-asparagine + ATP = L-asparaginyl-tRNA(Asn) + AMP + diphosphate + H(+). This chain is Asparagine--tRNA ligase, found in Phocaeicola vulgatus (strain ATCC 8482 / DSM 1447 / JCM 5826 / CCUG 4940 / NBRC 14291 / NCTC 11154) (Bacteroides vulgatus).